The primary structure comprises 449 residues: MKLLNKIKNENAIEFQILIEKSEWEKKHKESFEKIAKKTASKLKIPGFRPGKVPVEEAKKHVNEIEVFETTTNDLIPQVLTFLEQDESFINDDSETVDTPSVDILDFKDGELSLKVVYDLYPVATIESYNDLILTPIVNEAFEHEVNAEIEHALNSKSQRRVKDDNEFIEKGDEVRFDFKGMIDSVPFEGGSAKDHLLTIGSNQFIPGFEDQMIGLKKDERKNINVKFPDDYHATDLAGKAAVFEVFIKEITNVKPQELNDEFAKSFNLPNVNTVQELKDYIHNQIVLAKQEKNSERAWLEIAQQLLAKAKITPIPQSLIDREVSTLRQQVLSQLSQYKIELKQYLEFSKKSEAQFQEDLIRQAKETITLALLVDDIAETQNIVVSDEEVKERVAEMAKLYQGEEQAVIEQLSKNPDAVKEFLLHKKVVNYLIDLNKNNQPKNTTLSSK.

The region spanning 172–257 is the PPIase FKBP-type domain; that stretch reads GDEVRFDFKG…IKEITNVKPQ (86 aa).

Belongs to the FKBP-type PPIase family. Tig subfamily.

Its subcellular location is the cytoplasm. It carries out the reaction [protein]-peptidylproline (omega=180) = [protein]-peptidylproline (omega=0). Involved in protein export. Acts as a chaperone by maintaining the newly synthesized protein in an open conformation. Functions as a peptidyl-prolyl cis-trans isomerase. The chain is Trigger factor from Ureaplasma parvum serovar 3 (strain ATCC 27815 / 27 / NCTC 11736).